A 971-amino-acid polypeptide reads, in one-letter code: Nuclear factor NF-kappa-B p110 subunit (971 aa).

The segment covering 23–41 (STSGYSSSTSPNSTNRSFS) has biased composition (low complexity). Residues 23-46 (STSGYSSSTSPNSTNRSFSPAHSP) are disordered. Residues 147 to 339 (KHVPQLRIVE…NAINNRKSAQ (193 aa)) enclose the RHD domain. Ser-431 is subject to Phosphoserine; by PKA. Positions 452–457 (SRKRRR) match the Nuclear localization signal motif. Residues 453–496 (RKRRRTGSSANSSSSGTESSNNSLDLPKTLGLAQPPNGLPNLSQ) are disordered. The span at 460–475 (SSANSSSSGTESSNNS) shows a compositional bias: low complexity. Thr-620 carries the post-translational modification Phosphothreonine. Residue Tyr-626 is modified to Phosphotyrosine. 5 ANK repeats span residues 640–669 (DGDSALHVACQQDRAHYIRPLLGMGCNPNL), 673–702 (AGNTPLHVAVKEEHLSCVESFLNGVPTVQL), 710–740 (DGLTPLHMAIRQNKYDVAKKLISYDRTSISV), 745–775 (DGNNALHMAVLEQSVELLVLILDAQNENLTD), and 783–812 (AGHTPLELAERKANDRVVQLLKNVYPEKGE). The disordered stretch occupies residues 826–877 (IDSSSDESSDAGQLEIKSEEMDIETKDEDSVELDLSSGPRRQKDESSRDTEM). The segment covering 866–877 (RQKDESSRDTEM) has biased composition (basic and acidic residues). The residue at position 950 (Ser-950) is a Phosphoserine.

Rel-p68 subunit interacts with Dredd. Interacts with DMAP1. Interacts with akirin; interaction is immune stimulation-dependent; activates selected rel target gene promoters. Phosphorylated by lipopolysaccharide (LPS)-activated I-kappa-B kinase complex before being cleaved. Rel-p110 subunit is cleaved within seconds of an immune challenge into Rel-p49 subunit and Rel-p68 subunit. Rel-p110 subunit reappears after 45 minutes.

Its subcellular location is the nucleus. The protein localises to the cytoplasm. In terms of biological role, transcription factor that plays a key role in the humoral immune response as part of the peptidoglycan recognition protein (IMD) signaling pathway. Rel-p68 subunit translocates to the nucleus where it binds to the promoter of the Cecropin A1 gene and probably other antimicrobial peptide genes. I-kappa-B kinase complex (IKKbeta and key) and PGRP-LC are essential signaling components in transmitting the lipopolysaccharide (LPS) signal leading to cact degradation for NF-kappa-B (rel) activation. Part of a Toll-related receptor pathway that functions in the apoptosis of unfit cells during cell competition. Also part of some antiviral immunity: activated downstream of Sting signaling, which detects double-stranded RNA (dsRNA) from viruses, and promotes expression of antiviral effector genes. May be part of a NF-kappa-B and Tollo signaling cascade that regulates development of the peripheral nervous system. Possibly post-transcriptionally regulates the neuron-specific genes sc and ase, by promoting the rapid turnover of their transcripts in the wing imaginal disk. In Drosophila melanogaster (Fruit fly), this protein is Nuclear factor NF-kappa-B p110 subunit.